Here is a 613-residue protein sequence, read N- to C-terminus: RNA polymerase sigma factor RpoD (613 aa).

The tract at residues 2-80 is sigma-70 factor domain-1; the sequence is EQNPQSQLKL…TADEDAAEAA (79 aa). Residues 176–213 are disordered; it reads PTATHVGSELSQEDLDDDEDEDEEDGDDDSADDDNSID. Acidic residues predominate over residues 186-212; that stretch reads SQEDLDDDEDEDEEDGDDDSADDDNSI. The sigma-70 factor domain-2 stretch occupies residues 379–449; sequence MVEANLRLVI…TRSIADQART (71 aa). Residues 403 to 406 carry the Interaction with polymerase core subunit RpoC motif; that stretch reads DLIQ. Residues 458 to 534 are sigma-70 factor domain-3; sequence ETINKLNRIS…DTTLELPLDS (77 aa). Positions 547 to 600 are sigma-70 factor domain-4; sequence VLAGLTAREAKVLRMRFGIDMNTDYTLEEVGKQFDVTRERIRQIEAKALRKLRH. A DNA-binding region (H-T-H motif) is located at residues 573 to 592; that stretch reads LEEVGKQFDVTRERIRQIEA. Residues 584 to 599 are interaction with anti-sigma factors; that stretch reads RERIRQIEAKALRKLR.

The protein belongs to the sigma-70 factor family. RpoD/SigA subfamily. Interacts transiently with the RNA polymerase catalytic core formed by RpoA, RpoB, RpoC and RpoZ (2 alpha, 1 beta, 1 beta' and 1 omega subunit) to form the RNA polymerase holoenzyme that can initiate transcription. Identified in a complex containing RpoD, the RNA polymerase subunits RpoA, RpoB and RpoZ, CRP and DNA. Interacts with Rsd; this prevents interaction with the RNA polymerase catalytic core and with promoter DNA, and as a consequence, promotes transcription from promoters that require alternative sigma factors. Interacts with phage T4 AsiA; this interferes with binding to DNA and to the RNA polymerase. In terms of assembly, (Microbial infection) Interacts with Escherichia phage lambda antitermination protein Q.

The protein resides in the cytoplasm. In terms of biological role, sigma factors are initiation factors that promote the attachment of RNA polymerase to specific initiation sites and are then released. This sigma factor is the primary sigma factor during exponential growth. Preferentially transcribes genes associated with fast growth, such as ribosomal operons, other protein-synthesis related genes, rRNA- and tRNA-encoding genes and prfB. The protein is RNA polymerase sigma factor RpoD of Escherichia coli (strain K12).